We begin with the raw amino-acid sequence, 228 residues long: Methyltransferase verB (228 aa).

It belongs to the methyltransferase superfamily.

It participates in secondary metabolite biosynthesis; terpenoid biosynthesis. The protein operates within mycotoxin biosynthesis. Methyltransferase; part of the gene cluster that mediates the biosynthesis of the neurotoxin verrucosidin, a methylated alpha-pyrone polyketide that inhibits oxidative phosphorylation in mitochondria and thereby causes neurological diseases. The carbon backbone of verrucosidin is synthesized by the HR-PKS verA, and further modified by the other verrucodidin cluster enzymes. In Penicillium polonicum, this protein is Methyltransferase verB.